The chain runs to 260 residues: Hydroxyethylthiazole kinase (260 aa).

A substrate-binding site is contributed by Met-38. ATP contacts are provided by Lys-114 and Ser-161. Gly-188 serves as a coordination point for substrate.

The protein belongs to the Thz kinase family. Requires Mg(2+) as cofactor.

It carries out the reaction 5-(2-hydroxyethyl)-4-methylthiazole + ATP = 4-methyl-5-(2-phosphooxyethyl)-thiazole + ADP + H(+). Its pathway is cofactor biosynthesis; thiamine diphosphate biosynthesis; 4-methyl-5-(2-phosphoethyl)-thiazole from 5-(2-hydroxyethyl)-4-methylthiazole: step 1/1. In terms of biological role, catalyzes the phosphorylation of the hydroxyl group of 4-methyl-5-beta-hydroxyethylthiazole (THZ). The protein is Hydroxyethylthiazole kinase of Campylobacter lari (strain RM2100 / D67 / ATCC BAA-1060).